Consider the following 310-residue polypeptide: tRNA dimethylallyltransferase (310 aa).

14–21 contacts ATP; that stretch reads GPTASGKS. 16–21 serves as a coordination point for substrate; that stretch reads TASGKS. Interaction with substrate tRNA regions lie at residues 39 to 42 and 163 to 167; these read DSMQ and QRIVR.

It belongs to the IPP transferase family. As to quaternary structure, monomer. Mg(2+) is required as a cofactor.

The enzyme catalyses adenosine(37) in tRNA + dimethylallyl diphosphate = N(6)-dimethylallyladenosine(37) in tRNA + diphosphate. In terms of biological role, catalyzes the transfer of a dimethylallyl group onto the adenine at position 37 in tRNAs that read codons beginning with uridine, leading to the formation of N6-(dimethylallyl)adenosine (i(6)A). This Brucella abortus (strain S19) protein is tRNA dimethylallyltransferase.